The chain runs to 248 residues: L-seryl-tRNA(Sec) kinase (248 aa).

An ATP-binding site is contributed by 7 to 14 (GLPGVGKS).

The protein belongs to the L-seryl-tRNA(Sec) kinase family.

The catalysed reaction is L-seryl-tRNA(Sec) + ATP = O-phospho-L-seryl-tRNA(Sec) + ADP. Its pathway is aminoacyl-tRNA biosynthesis; selenocysteinyl-tRNA(Sec) biosynthesis; selenocysteinyl-tRNA(Sec) from L-seryl-tRNA(Sec) (archaeal/eukaryal route): step 1/2. Its function is as follows. Specifically phosphorylates seryl-tRNA(Sec) to O-phosphoseryl-tRNA(Sec), an activated intermediate for selenocysteine biosynthesis. This chain is L-seryl-tRNA(Sec) kinase (pstK), found in Methanocaldococcus jannaschii (strain ATCC 43067 / DSM 2661 / JAL-1 / JCM 10045 / NBRC 100440) (Methanococcus jannaschii).